The chain runs to 252 residues: 5'-nucleotidase SurE (252 aa).

A divalent metal cation-binding residues include Asp-8, Asp-9, Ser-40, and Asn-93.

Belongs to the SurE nucleotidase family. Requires a divalent metal cation as cofactor.

The protein resides in the cytoplasm. It catalyses the reaction a ribonucleoside 5'-phosphate + H2O = a ribonucleoside + phosphate. Its function is as follows. Nucleotidase that shows phosphatase activity on nucleoside 5'-monophosphates. The chain is 5'-nucleotidase SurE from Erythrobacter litoralis (strain HTCC2594).